We begin with the raw amino-acid sequence, 381 residues long: MSILVYEVSKSLGNLKVLDRVSLYVRKVSLVALLGPSGSGKSSLLRIIAGLDSPDYGSVWLHGTDMTNTSTQYRHMAFVFQHYALFKNMTVYENISFGLRLRGFSYQKIRNKVNDLLDCLRISDIVSEYPGKLSGGQKQRVALARSLAIKSDFLLLDEPFGALDGELRRHLSKWLKRYLKDNGITTIMVTHDQKEAISMADEIVVLKQGRFLQQGRSKNLYDEPIDYFVGIFSGSFIEFPQLEESLDAPLGSSSSSSSSTKKSMEKDFTPFIPDLIWSQIFTNQSIHHYHFFLRPHELYLESQIDLKAIPVQIKKIIYKRTFVQLDLSITPSSWNITIPIGYQAFRKLNIQSFVQKLYIKPRNQVYLRAYPKKKNIISKQI.

The ABC transporter domain maps to Ile-3–Ser-233. Gly-35 to Ser-42 is an ATP binding site.

Belongs to the ABC transporter superfamily. Sulfate/tungstate importer (TC 3.A.1.6) family.

Its subcellular location is the plastid. It is found in the chloroplast. The catalysed reaction is sulfate(out) + ATP + H2O = sulfate(in) + ADP + phosphate + H(+). It catalyses the reaction thiosulfate(out) + ATP + H2O = thiosulfate(in) + ADP + phosphate + H(+). Its function is as follows. Part of the ABC transporter complex involved in sulfate/thiosulfate import. Responsible for energy coupling to the transport system. The protein is Sulfate/thiosulfate import ATP-binding protein CysA of Anthoceros angustus (Hornwort).